The following is a 361-amino-acid chain: Adenosine kinase (361 aa).

The Nuclear localization signal motif lies at 7 to 15 (PKPKKLKVE). Asp34 serves as a coordination point for adenosine. Ser48 serves as a coordination point for Mg(2+). A Phosphotyrosine modification is found at Tyr76. Asn147 contacts Mg(2+). Adenosine is bound at residue Gln305. The active site involves Asp316. The active-site Proton acceptor is the Asp316.

Belongs to the carbohydrate kinase PfkB family. As to quaternary structure, monomer. It depends on Mg(2+) as a cofactor.

The protein localises to the nucleus. It catalyses the reaction adenosine + ATP = AMP + ADP + H(+). Its pathway is purine metabolism; AMP biosynthesis via salvage pathway; AMP from adenosine: step 1/1. Catalyzes the phosphorylation of the purine nucleoside adenosine at the 5' position in an ATP-dependent manner. Serves as a potential regulator of concentrations of extracellular adenosine and intracellular adenine nucleotides. This chain is Adenosine kinase (Adk), found in Rattus norvegicus (Rat).